Reading from the N-terminus, the 334-residue chain is Methionyl-tRNA formyltransferase (334 aa).

111-114 (SILP) serves as a coordination point for (6S)-5,6,7,8-tetrahydrofolate.

Belongs to the Fmt family.

It carries out the reaction L-methionyl-tRNA(fMet) + (6R)-10-formyltetrahydrofolate = N-formyl-L-methionyl-tRNA(fMet) + (6S)-5,6,7,8-tetrahydrofolate + H(+). In terms of biological role, attaches a formyl group to the free amino group of methionyl-tRNA(fMet). The formyl group appears to play a dual role in the initiator identity of N-formylmethionyl-tRNA by promoting its recognition by IF2 and preventing the misappropriation of this tRNA by the elongation apparatus. This Gloeothece citriformis (strain PCC 7424) (Cyanothece sp. (strain PCC 7424)) protein is Methionyl-tRNA formyltransferase.